The primary structure comprises 430 residues: FAD-dependent monooxygenase asL4 (430 aa).

FAD is bound by residues 11–14 (GGIA), 33–34 (ER), Arg108, and Tyr278.

This sequence belongs to the aromatic-ring hydroxylase family. It depends on FAD as a cofactor.

Its pathway is secondary metabolite biosynthesis; terpenoid biosynthesis. In terms of biological role, flavin-dependent monooxygenase; part of the gene cluster that mediates the biosynthesis of xenovulene A, an unusual meroterpenoid that has potent inhibitory effects on the human gamma-aminobutyrate A (GABAA) benzodiazepine receptor. The first step of xenovulene A biosynthesis is the biosynthesis of 3-methylorcinaldehyde performed by the non-reducing polyketide synthase aspks1. The salicylate hydroxylase asL1 then catalyzes the oxidative dearomatization of 3-methylorcinaldehyde to yield a dearomatized hydroxycyclohexadione. The 2-oxoglutarate-dependent dioxygenase asL3 further catalyzes the oxidative ring expansion to provide the first tropolone metabolite. The cytochrome P450 monooxygenase asR2 allows the synthesis of tropolone hemiacetal. In parallel, a previously unrecognised class of terpene cyclase, asR6, produces alpha-humulene from farnesylpyrophosphate (FPP). The putative Diels-Alderase asR5 probably catalyzes the formation of the tropolone-humulene skeleton by linking humulene and the polyketide moiety. Oxidative-ring contractions catalyzed by asL4 and asL6 then processively remove carbon atoms from the polyketide to yield xenovulene A. This is FAD-dependent monooxygenase asL4 from Sarocladium schorii (Acremonium strictum (strain IMI 501407)).